The primary structure comprises 118 residues: MSTLNQAHCEACRADAPQVSEAELPELLKQIPDWNIEVRDGVMQLEKVFLFKNFKFALAFTNAVGEIAEAEGHHPGLLTEWGKVTVTWWSHSIKGLHRNDFIMAARTDGVASGAEGRK.

It belongs to the pterin-4-alpha-carbinolamine dehydratase family.

The catalysed reaction is (4aS,6R)-4a-hydroxy-L-erythro-5,6,7,8-tetrahydrobiopterin = (6R)-L-erythro-6,7-dihydrobiopterin + H2O. The protein is Putative pterin-4-alpha-carbinolamine dehydratase of Pseudomonas savastanoi pv. phaseolicola (strain 1448A / Race 6) (Pseudomonas syringae pv. phaseolicola (strain 1448A / Race 6)).